A 583-amino-acid chain; its full sequence is uncharacterized protein (583 aa).

A compositionally biased stretch (polar residues) spans 1-38 (MGQGESIPSRQIQRDASMQAVSSESENINDSDRQNSGF). Disordered stretches follow at residues 1–39 (MGQGESIPSRQIQRDASMQAVSSESENINDSDRQNSGFS), 53–124 (GLRR…AIPQ), 156–197 (TQNN…TAIG), and 362–452 (NSGS…QTDH). Over residues 70 to 80 (GNRDRTTERSA) the composition is skewed to basic and acidic residues. A compositionally biased stretch (low complexity) spans 88–102 (SLLNRNSPSLRSLSP). Polar residues-rich tracts occupy residues 156–165 (TQNNQSTLAS), 172–191 (VSSSGGQEMQDHGSVNNLES), 384–408 (LISSLVNSQNQTTSVSDNTGPNENV), and 420–452 (ASTATDVNGISDNNGSSTQQAPETRNNNSQTDH). The RING-type zinc-finger motif lies at 525–568 (CLVCLSNFELNDECRRLKQCNHFFHRECIDQWLTSSQNSCPLCR). Position 580 is a phosphoserine (Ser580).

The protein resides in the membrane. This is an uncharacterized protein from Schizosaccharomyces pombe (strain 972 / ATCC 24843) (Fission yeast).